We begin with the raw amino-acid sequence, 387 residues long: Ferrochelatase (387 aa).

H196 and E277 together coordinate Fe cation.

It belongs to the ferrochelatase family.

It is found in the cytoplasm. The catalysed reaction is heme b + 2 H(+) = protoporphyrin IX + Fe(2+). The protein operates within porphyrin-containing compound metabolism; protoheme biosynthesis; protoheme from protoporphyrin-IX: step 1/1. Functionally, catalyzes the ferrous insertion into protoporphyrin IX. This Gloeothece citriformis (strain PCC 7424) (Cyanothece sp. (strain PCC 7424)) protein is Ferrochelatase.